The chain runs to 232 residues: 5'-methylthioadenosine/S-adenosylhomocysteine nucleosidase (232 aa).

The Proton acceptor role is filled by Glu-12. Substrate contacts are provided by residues Gly-78, Ile-152, and 173–174; that span reads ME. Asp-197 functions as the Proton donor in the catalytic mechanism.

It belongs to the PNP/UDP phosphorylase family. MtnN subfamily. In terms of assembly, homodimer.

It catalyses the reaction S-adenosyl-L-homocysteine + H2O = S-(5-deoxy-D-ribos-5-yl)-L-homocysteine + adenine. It carries out the reaction S-methyl-5'-thioadenosine + H2O = 5-(methylsulfanyl)-D-ribose + adenine. The enzyme catalyses 5'-deoxyadenosine + H2O = 5-deoxy-D-ribose + adenine. The protein operates within amino-acid biosynthesis; L-methionine biosynthesis via salvage pathway; S-methyl-5-thio-alpha-D-ribose 1-phosphate from S-methyl-5'-thioadenosine (hydrolase route): step 1/2. Functionally, catalyzes the irreversible cleavage of the glycosidic bond in both 5'-methylthioadenosine (MTA) and S-adenosylhomocysteine (SAH/AdoHcy) to adenine and the corresponding thioribose, 5'-methylthioribose and S-ribosylhomocysteine, respectively. Also cleaves 5'-deoxyadenosine, a toxic by-product of radical S-adenosylmethionine (SAM) enzymes, into 5-deoxyribose and adenine. Thus, is required for in vivo function of the radical SAM enzymes biotin synthase and lipoic acid synthase, that are inhibited by 5'-deoxyadenosine accumulation. The sequence is that of 5'-methylthioadenosine/S-adenosylhomocysteine nucleosidase from Salmonella agona (strain SL483).